Consider the following 356-residue polypeptide: Alpha-N-acetylneuraminide alpha-2,8-sialyltransferase (356 aa).

Residues 1–29 (MSPCGRARRQTSRGAMAVLAWKFPRTRLP) lie on the Cytoplasmic side of the membrane. A helical; Signal-anchor for type II membrane protein membrane pass occupies residues 30–48 (MGASALCVVVLCWLYIFPV). Residues 49–356 (YRLPNEKEIV…CEDTSLQPTS (308 aa)) lie on the Lumenal side of the membrane. 2 N-linked (GlcNAc...) asparagine glycosylation sites follow: Asn-71 and Asn-119. Intrachain disulfides connect Cys-138–Cys-287 and Cys-152–Cys-347. 2 residues coordinate CMP-N-acetyl-beta-neuraminate: Asn-143 and Asn-166. Residues Asn-214 and Asn-245 are each glycosylated (N-linked (GlcNAc...) asparagine). 5 residues coordinate CMP-N-acetyl-beta-neuraminate: Ser-274, Thr-275, Gly-276, Trp-296, and His-310. The active-site Proton donor/acceptor is the His-322.

It belongs to the glycosyltransferase 29 family. In terms of tissue distribution, strongly expressed in melanoma cell lines, adult and fetal brain and to a lesser extent in adult and fetal lung.

It is found in the golgi apparatus membrane. It catalyses the reaction an N-acetyl-alpha-neuraminyl-(2-&gt;3)-beta-D-galactosyl derivative + CMP-N-acetyl-beta-neuraminate = an N-acetyl-alpha-neuraminyl-(2-&gt;8)-N-acetyl-alpha-neuraminyl-(2-&gt;3)-beta-D-galactosyl derivative + CMP + H(+). The catalysed reaction is a ganglioside GM3 (d18:1(4E)) + CMP-N-acetyl-beta-neuraminate = a ganglioside GD3 (d18:1(4E)) + CMP + H(+). The enzyme catalyses a ganglioside GD3 (d18:1(4E)) + CMP-N-acetyl-beta-neuraminate = a ganglioside GT3 (d18:1(4E)) + CMP + H(+). It carries out the reaction a ganglioside GD1a (d18:1(4E)) + CMP-N-acetyl-beta-neuraminate = a ganglioside GT1a (d18:1(4E)) + CMP + H(+). It catalyses the reaction a ganglioside GT1b (d18:1(4E)) + CMP-N-acetyl-beta-neuraminate = a ganglioside GQ1b (d18:1(4E)) + CMP + H(+). The catalysed reaction is a ganglioside GM1b (d18:1(4E)) + CMP-N-acetyl-beta-neuraminate = a ganglioside GD1c (d18:1(4E)) + CMP + H(+). The enzyme catalyses a ganglioside GD3 + CMP-N-acetyl-beta-neuraminate = a ganglioside GT3 + CMP + H(+). It carries out the reaction [alpha-N-acetylneuraminyl-(2-&gt;8)](n)-alpha-N-acetylneuraminyl-(2-&gt;8)-alpha-N-acetylneuraminyl-(2-&gt;3)-beta-D-galactosyl-(1-&gt;4)-beta-D-glucosyl-(1&lt;-&gt;1)-ceramide + CMP-N-acetyl-beta-neuraminate = [alpha-N-acetylneuraminyl-(2-&gt;8)](n+1)-alpha-N-acetylneuraminyl-(2-&gt;8)-alpha-N-acetylneuraminyl-(2-&gt;3)-beta-D-galactosyl-(1-&gt;4)-beta-D-glucosyl-(1&lt;-&gt;1)-ceramide + CMP + H(+). It functions in the pathway protein modification; protein glycosylation. The protein operates within lipid metabolism; sphingolipid metabolism. Its function is as follows. Catalyzes the addition of sialic acid in alpha 2,8-linkage to the sialic acid moiety of the ganglioside GM3 to form ganglioside GD3; gangliosides are a subfamily of complex glycosphingolipds that contain one or more residues of sialic acid. Can catalyze the addition of a second alpha-2,8-sialic acid to GD3 to form GT3. Can use GM1b, GD1a and GT1b as acceptor substrates to synthesize GD1c, GT1a and GQ1b respectively. Can synthesize unusual tetra- and pentasialylated lactosylceramide derivatives identified as GQ3 (II3Neu5Ac4-Gg2Cer) and GP3 (II3Neu5Ac5-Gg2Cer) in breast cancer cells. This is Alpha-N-acetylneuraminide alpha-2,8-sialyltransferase from Homo sapiens (Human).